Reading from the N-terminus, the 792-residue chain is Endonuclease MutS2 (792 aa).

334 to 341 (GPNTGGKT) is a binding site for ATP. Residues 717-792 (IDLRGMMLSE…ENGVTVVELK (76 aa)) form the Smr domain.

This sequence belongs to the DNA mismatch repair MutS family. MutS2 subfamily. In terms of assembly, homodimer. Binds to stalled ribosomes, contacting rRNA.

Its function is as follows. Endonuclease that is involved in the suppression of homologous recombination and thus may have a key role in the control of bacterial genetic diversity. In terms of biological role, acts as a ribosome collision sensor, splitting the ribosome into its 2 subunits. Detects stalled/collided 70S ribosomes which it binds and splits by an ATP-hydrolysis driven conformational change. Acts upstream of the ribosome quality control system (RQC), a ribosome-associated complex that mediates the extraction of incompletely synthesized nascent chains from stalled ribosomes and their subsequent degradation. Probably generates substrates for RQC. This Ruminiclostridium cellulolyticum (strain ATCC 35319 / DSM 5812 / JCM 6584 / H10) (Clostridium cellulolyticum) protein is Endonuclease MutS2.